A 430-amino-acid polypeptide reads, in one-letter code: Sesquiterpene synthase 15 (430 aa).

Asp182, Asp186, and Glu335 together coordinate Mg(2+). The DDXXD motif motif lies at 182-186 (DDIYD).

Belongs to the terpene synthase family. Tpsa subfamily. Mg(2+) serves as cofactor. The cofactor is Mn(2+).

The protein operates within secondary metabolite biosynthesis; terpenoid biosynthesis. Its function is as follows. Sesquiterpene synthase involved in the biosynthesis of volatile compounds. No activity detected with geranyl diphosphate (GPP) and farnesyl diphosphate (FPP) as substrates. The protein is Sesquiterpene synthase 15 of Solanum lycopersicum (Tomato).